The primary structure comprises 428 residues: MKTSLFKSLYFQVLTAIAIGILLGHYYPELGAQMKPLGDAFVKLIKMIIAPVIFCTVVTGIAGMESMKAVGRTGAVALLYFEIVSTIALIIGLIIVNVVQPGAGMNVDPATLDAQAVAVYAAQAKEQGIIAFLMDVIPGSVIGAFASGNILQVLLFAVLFGFALHRLGSKGQLIFNVIESFSQVIFGIINMIMRLAPIGAFGAMAFTIGKYGVGSLVQLGQLIICFYITCILFVVVVLGTIARVTGFSIFKFIRYIREELLIVLGTSSSESALPRMLDKMEKLGCRKSVVGLVIPTGYSFNLDGTSIYLTMAAVFIAQATNSHMDIFHQITLLVVLLLSSKGAAGVTGSGFIVLAATISAVGHLPVAGLALILGIDRFMSEARALTNLVGNGVATVVVAKWVKELDHQKLDDVLNNRAPDGKTHEISS.

9 helical membrane passes run 5–27 (LFKSLYFQVLTAIAIGILLGHYY), 47–64 (MIIAPVIFCTVVTGIAGM), 77–99 (ALLYFEIVSTIALIIGLIIVNVV), 141–163 (VIGAFASGNILQVLLFAVLFGFA), 184–206 (VIFGIINMIMRLAPIGAFGAMAF), 216–238 (LVQLGQLIICFYITCILFVVVVL), 289–311 (VVGLVIPTGYSFNLDGTSIYLTM), 326–348 (IFHQITLLVVLLLSSKGAAGVTG), and 353–375 (VLAATISAVGHLPVAGLALILGI).

The protein belongs to the dicarboxylate/amino acid:cation symporter (DAACS) (TC 2.A.23) family.

The protein resides in the cell inner membrane. In terms of biological role, responsible for the transport of dicarboxylates such as succinate, fumarate, and malate from the periplasm across the inner membrane. The chain is Aerobic C4-dicarboxylate transport protein (dctA) from Salmonella typhimurium (strain LT2 / SGSC1412 / ATCC 700720).